The primary structure comprises 62 residues: Paralithocin 1 (62 aa).

Residues Met1 to Ala23 form the signal peptide. 4 disulfides stabilise this stretch: Cys29–Cys55, Cys33–Cys51, Cys37–Cys49, and Cys42–Cys52. Position 61 is a tyrosine amide; partial (Tyr61).

Belongs to the paralithocin family. The amidated form is probably the active form.

Functionally, has weak antibacterial activity, mainly against marine Gram-positive bacteria like C.maltaromaticum (MIC=200 uM), C.mobile (MIC=100 uM), C.divergens (MIC=200 uM) and C.funditum (MIC=200 uM) but also against C.glutamicum (MIC=50 uM). Has very little or no activity against Gram-negative bacteria. The polypeptide is Paralithocin 1 (Paralithodes camtschaticus (Red king crab)).